Here is a 72-residue protein sequence, read N- to C-terminus: Heat shock factor-binding protein 1-like protein 1 (72 aa).

A coiled-coil region spans residues 12-66 (DLLQNAAENLLQEVEEHFQALTATLNLRMEEMGNRIEDLQRNVDDLMAQAGIENS).

Belongs to the HSBP1 family.

This chain is Heat shock factor-binding protein 1-like protein 1 (Hsbp1l1), found in Rattus norvegicus (Rat).